A 78-amino-acid polypeptide reads, in one-letter code: NAD(P)H-quinone oxidoreductase subunit O (78 aa).

The protein belongs to the complex I NdhO subunit family. In terms of assembly, NDH-1 can be composed of about 15 different subunits; different subcomplexes with different compositions have been identified which probably have different functions.

Its subcellular location is the cellular thylakoid membrane. The catalysed reaction is a plastoquinone + NADH + (n+1) H(+)(in) = a plastoquinol + NAD(+) + n H(+)(out). The enzyme catalyses a plastoquinone + NADPH + (n+1) H(+)(in) = a plastoquinol + NADP(+) + n H(+)(out). Its function is as follows. NDH-1 shuttles electrons from an unknown electron donor, via FMN and iron-sulfur (Fe-S) centers, to quinones in the respiratory and/or the photosynthetic chain. The immediate electron acceptor for the enzyme in this species is believed to be plastoquinone. Couples the redox reaction to proton translocation, and thus conserves the redox energy in a proton gradient. Cyanobacterial NDH-1 also plays a role in inorganic carbon-concentration. This is NAD(P)H-quinone oxidoreductase subunit O from Prochlorococcus marinus (strain MIT 9312).